We begin with the raw amino-acid sequence, 432 residues long: Succinate--CoA ligase [GDP-forming] subunit beta, mitochondrial (432 aa).

A mitochondrion-targeting transit peptide spans Met1–Trp37. The region spanning Lys46 to Phe274 is the ATP-grasp domain. Gln57 is a GTP binding site. At Lys73 the chain carries N6-acetyllysine. At Lys78 the chain carries N6-succinyllysine. Gly90–Gly92 serves as a coordination point for GTP. N6-acetyllysine is present on residues Lys111, Lys132, and Lys139. A GTP-binding site is contributed by Leu146. Ser161 is modified (phosphoserine). Residues Lys200, Lys218, and Lys227 each carry the N6-acetyllysine modification. Residues Asn243 and Asp257 each coordinate Mg(2+). The residue at position 271 (Lys271) is an N6-acetyllysine. Asn308 is a binding site for substrate. Lys338 bears the N6-succinyllysine mark. The residue at position 347 (Lys347) is an N6-acetyllysine. Gly365 to Val367 is a substrate binding site. 2 positions are modified to N6-acetyllysine: Lys386 and Lys423.

The protein belongs to the succinate/malate CoA ligase beta subunit family. GTP-specific subunit beta subfamily. Heterodimer of an alpha and a beta subunit. The beta subunit determines specificity for GTP. Mg(2+) is required as a cofactor.

The protein resides in the mitochondrion. The catalysed reaction is GTP + succinate + CoA = succinyl-CoA + GDP + phosphate. The protein operates within carbohydrate metabolism; tricarboxylic acid cycle; succinate from succinyl-CoA (ligase route): step 1/1. Its function is as follows. GTP-specific succinyl-CoA synthetase functions in the citric acid cycle (TCA), coupling the hydrolysis of succinyl-CoA to the synthesis of GTP and thus represents the only step of substrate-level phosphorylation in the TCA. The beta subunit provides nucleotide specificity of the enzyme and binds the substrate succinate, while the binding sites for coenzyme A and phosphate are found in the alpha subunit. The protein is Succinate--CoA ligase [GDP-forming] subunit beta, mitochondrial of Bos taurus (Bovine).